The chain runs to 217 residues: Probable transaldolase (217 aa).

Lysine 83 acts as the Schiff-base intermediate with substrate in catalysis.

Belongs to the transaldolase family. Type 3B subfamily.

Its subcellular location is the cytoplasm. The catalysed reaction is D-sedoheptulose 7-phosphate + D-glyceraldehyde 3-phosphate = D-erythrose 4-phosphate + beta-D-fructose 6-phosphate. The protein operates within carbohydrate degradation; pentose phosphate pathway; D-glyceraldehyde 3-phosphate and beta-D-fructose 6-phosphate from D-ribose 5-phosphate and D-xylulose 5-phosphate (non-oxidative stage): step 2/3. Functionally, transaldolase is important for the balance of metabolites in the pentose-phosphate pathway. This Caldicellulosiruptor saccharolyticus (strain ATCC 43494 / DSM 8903 / Tp8T 6331) protein is Probable transaldolase.